A 180-amino-acid chain; its full sequence is Signaling threshold-regulating transmembrane adapter 1 (180 aa).

At 1 to 24 (MSRDYNCTTDDQLAWGIPSISHAW) the chain is on the extracellular side. The N-linked (GlcNAc...) asparagine glycan is linked to Asn6. A helical; Signal-anchor for type III membrane protein membrane pass occupies residues 25 to 45 (GLWALLGVVTVLLLISLAALL). Residues 46–180 (SQWTRGRRRN…AYANSQPAPS (135 aa)) lie on the Cytoplasmic side of the membrane. Residues Ser63 and Ser66 each carry the phosphoserine modification. Tyr73 carries the phosphotyrosine modification. The interval 73-76 (YGNL) is interaction with GRB2. The tract at residues 81-103 (TGRLSQEPRSEEQDPPSSGGLAR) is disordered. Phosphoserine is present on residues Ser85 and Ser90. Residues Tyr111, Tyr132, and Tyr153 each carry the phosphotyrosine modification. Residues 130–135 (IKYCEV) are interaction with PTPN11. Positions 153–156 (YASV) are interaction with CSK. Ser166 is subject to Phosphoserine. The residue at position 172 (Tyr172) is a Phosphotyrosine. Residues 172-175 (YANS) form an interaction with GRB2 region.

In terms of assembly, homodimer; disulfide-linked. When phosphorylated, interacts with PTPN11/SHP2, GRB2 and CSK. Phosphorylated on tyrosines upon TCR activation; which leads to the recruitment of PTPN11, GRB2 and CSK. In terms of tissue distribution, expressed in thymus and spleen, with highest levels in immature thymocytes (at protein level).

The protein resides in the cell membrane. In terms of biological role, negatively regulates T-cell antigen receptor (TCR)-mediated signaling. Involved in positive selection of T-cells. The protein is Signaling threshold-regulating transmembrane adapter 1 (Sit1) of Mus musculus (Mouse).